The sequence spans 338 residues: Fructose-1,6-bisphosphatase class 1 (338 aa).

Positions 92, 115, 117, and 118 each coordinate Mg(2+). Residues 118–121 (DGSS), N211, Y244, and K274 contribute to the substrate site. E280 provides a ligand contact to Mg(2+).

Belongs to the FBPase class 1 family. In terms of assembly, homotetramer. The cofactor is Mg(2+).

The protein resides in the cytoplasm. It carries out the reaction beta-D-fructose 1,6-bisphosphate + H2O = beta-D-fructose 6-phosphate + phosphate. The protein operates within carbohydrate biosynthesis; gluconeogenesis. The sequence is that of Fructose-1,6-bisphosphatase class 1 from Photobacterium profundum (strain SS9).